The primary structure comprises 239 residues: Purine nucleoside phosphorylase DeoD-type (239 aa).

His5 is a binding site for a purine D-ribonucleoside. Phosphate contacts are provided by residues Gly21, Arg25, Arg44, and 88–91 (RVGS). Residues 180–182 (EME) and 204–205 (SD) each bind a purine D-ribonucleoside. Asp205 acts as the Proton donor in catalysis.

It belongs to the PNP/UDP phosphorylase family. In terms of assembly, homohexamer; trimer of homodimers.

The enzyme catalyses a purine D-ribonucleoside + phosphate = a purine nucleobase + alpha-D-ribose 1-phosphate. It carries out the reaction a purine 2'-deoxy-D-ribonucleoside + phosphate = a purine nucleobase + 2-deoxy-alpha-D-ribose 1-phosphate. In terms of biological role, catalyzes the reversible phosphorolytic breakdown of the N-glycosidic bond in the beta-(deoxy)ribonucleoside molecules, with the formation of the corresponding free purine bases and pentose-1-phosphate. In Salmonella arizonae (strain ATCC BAA-731 / CDC346-86 / RSK2980), this protein is Purine nucleoside phosphorylase DeoD-type.